The primary structure comprises 161 residues: Ribosome maturation factor RimP (161 aa).

Belongs to the RimP family.

It localises to the cytoplasm. Its function is as follows. Required for maturation of 30S ribosomal subunits. This chain is Ribosome maturation factor RimP, found in Rickettsia conorii (strain ATCC VR-613 / Malish 7).